The following is a 131-amino-acid chain: Large ribosomal subunit protein eL32 (131 aa).

It belongs to the eukaryotic ribosomal protein eL32 family. In terms of assembly, component of the large ribosomal subunit (LSU). Mature N.crassa ribosomes consist of a small (40S) and a large (60S) subunit. The 40S small subunit contains 1 molecule of ribosomal RNA (18S rRNA) and at least 32 different proteins. The large 60S subunit contains 3 rRNA molecules (26S, 5.8S and 5S rRNA) and at least 42 different proteins.

The protein localises to the cytoplasm. In terms of biological role, component of the ribosome, a large ribonucleoprotein complex responsible for the synthesis of proteins in the cell. The small ribosomal subunit (SSU) binds messenger RNAs (mRNAs) and translates the encoded message by selecting cognate aminoacyl-transfer RNA (tRNA) molecules. The large subunit (LSU) contains the ribosomal catalytic site termed the peptidyl transferase center (PTC), which catalyzes the formation of peptide bonds, thereby polymerizing the amino acids delivered by tRNAs into a polypeptide chain. The nascent polypeptides leave the ribosome through a tunnel in the LSU and interact with protein factors that function in enzymatic processing, targeting, and the membrane insertion of nascent chains at the exit of the ribosomal tunnel. This chain is Large ribosomal subunit protein eL32 (crp-63), found in Neurospora crassa (strain ATCC 24698 / 74-OR23-1A / CBS 708.71 / DSM 1257 / FGSC 987).